The sequence spans 413 residues: Serine hydroxymethyltransferase (413 aa).

(6S)-5,6,7,8-tetrahydrofolate is bound by residues leucine 119 and 123–125; that span reads GHL. Position 228 is an N6-(pyridoxal phosphate)lysine (lysine 228).

Belongs to the SHMT family. In terms of assembly, homodimer. The cofactor is pyridoxal 5'-phosphate.

It localises to the cytoplasm. It carries out the reaction (6R)-5,10-methylene-5,6,7,8-tetrahydrofolate + glycine + H2O = (6S)-5,6,7,8-tetrahydrofolate + L-serine. It functions in the pathway one-carbon metabolism; tetrahydrofolate interconversion. The protein operates within amino-acid biosynthesis; glycine biosynthesis; glycine from L-serine: step 1/1. Catalyzes the reversible interconversion of serine and glycine with tetrahydrofolate (THF) serving as the one-carbon carrier. This reaction serves as the major source of one-carbon groups required for the biosynthesis of purines, thymidylate, methionine, and other important biomolecules. Also exhibits THF-independent aldolase activity toward beta-hydroxyamino acids, producing glycine and aldehydes, via a retro-aldol mechanism. This chain is Serine hydroxymethyltransferase, found in Desulfatibacillum aliphaticivorans.